We begin with the raw amino-acid sequence, 202 residues long: uncharacterized protein (202 aa).

Residues 178–202 form a disordered region; sequence VCSSEDSEADRYSDYGWGGPSSPFN.

This is an uncharacterized protein from Homo sapiens (Human).